Reading from the N-terminus, the 226-residue chain is Orotate phosphoribosyltransferase 1 (226 aa).

K30 is a binding site for 5-phospho-alpha-D-ribose 1-diphosphate. 38–39 (FF) contributes to the orotate binding site. Residues 76–77 (YK), R106, K107, K110, H112, and 132–140 (DDVMTAGTA) contribute to the 5-phospho-alpha-D-ribose 1-diphosphate site. Orotate is bound by residues T136 and R164. 2 positions are modified to phosphoserine: S213 and S225.

This sequence belongs to the purine/pyrimidine phosphoribosyltransferase family. PyrE subfamily. As to quaternary structure, homodimer.

It catalyses the reaction orotidine 5'-phosphate + diphosphate = orotate + 5-phospho-alpha-D-ribose 1-diphosphate. The protein operates within pyrimidine metabolism; UMP biosynthesis via de novo pathway; UMP from orotate: step 1/2. Catalyzes the transfer of a ribosyl phosphate group from 5-phosphoribose 1-diphosphate to orotate, leading to the formation of orotidine monophosphate (OMP). This Saccharomyces cerevisiae (strain ATCC 204508 / S288c) (Baker's yeast) protein is Orotate phosphoribosyltransferase 1 (URA5).